The chain runs to 432 residues: Gamma-glutamyl phosphate reductase (432 aa).

It belongs to the gamma-glutamyl phosphate reductase family.

It localises to the cytoplasm. The catalysed reaction is L-glutamate 5-semialdehyde + phosphate + NADP(+) = L-glutamyl 5-phosphate + NADPH + H(+). The protein operates within amino-acid biosynthesis; L-proline biosynthesis; L-glutamate 5-semialdehyde from L-glutamate: step 2/2. In terms of biological role, catalyzes the NADPH-dependent reduction of L-glutamate 5-phosphate into L-glutamate 5-semialdehyde and phosphate. The product spontaneously undergoes cyclization to form 1-pyrroline-5-carboxylate. The chain is Gamma-glutamyl phosphate reductase from Brachyspira hyodysenteriae (strain ATCC 49526 / WA1).